Consider the following 234-residue polypeptide: DNA repair protein RecO (234 aa).

This sequence belongs to the RecO family.

Functionally, involved in DNA repair and RecF pathway recombination. This is DNA repair protein RecO from Coxiella burnetii (strain RSA 331 / Henzerling II).